Consider the following 683-residue polypeptide: Acyl-CoA synthetase short-chain family member 3, mitochondrial (683 aa).

A mitochondrion-targeting transit peptide spans 1–29 (MKPSWLQCRKVTGAGTLGAPLPGSPSVRG). 223–226 (EPGR) provides a ligand contact to CoA. Residues 421 to 423 (GER) and 442 to 447 (DHWWQT) each bind ATP. N6-succinyllysine is present on lysine 514. Lysine 520 bears the N6-acetyllysine mark. Residues aspartate 535, arginine 550, and arginine 561 each contribute to the ATP site. Arginine 620 serves as a coordination point for CoA.

The protein belongs to the ATP-dependent AMP-binding enzyme family. As to expression, expressed in a wide range of tissues, with the highest levels observed in the liver followed by kidney.

The protein resides in the mitochondrion matrix. It catalyses the reaction acetate + ATP + CoA = acetyl-CoA + AMP + diphosphate. The catalysed reaction is propanoate + ATP + CoA = propanoyl-CoA + AMP + diphosphate. The enzyme catalyses butanoate + ATP + CoA = butanoyl-CoA + AMP + diphosphate. Its function is as follows. Catalyzes the synthesis of acetyl-CoA from short-chain fatty acids. Propionate is the preferred substrate but can also utilize acetate and butyrate with a much lower affinity. This is Acyl-CoA synthetase short-chain family member 3, mitochondrial (Acss3) from Rattus norvegicus (Rat).